A 299-amino-acid polypeptide reads, in one-letter code: Probable lipid kinase YegS (299 aa).

The region spanning 2–133 (AEFPASLLIL…IDMAQVNKQT (132 aa)) is the DAGKc domain. ATP is bound by residues T40, 66–72 (GDGTINE), and T95. The Mg(2+) site is built by L215, D218, and L220. The active-site Proton acceptor is E271.

This sequence belongs to the diacylglycerol/lipid kinase family. YegS lipid kinase subfamily. The cofactor is Mg(2+). Ca(2+) serves as cofactor.

The protein localises to the cytoplasm. Functionally, probably phosphorylates lipids; the in vivo substrate is unknown. This is Probable lipid kinase YegS from Escherichia coli O6:K15:H31 (strain 536 / UPEC).